Consider the following 86-residue polypeptide: Putative membrane protein insertion efficiency factor (86 aa).

It belongs to the UPF0161 family.

Its subcellular location is the cell inner membrane. Its function is as follows. Could be involved in insertion of integral membrane proteins into the membrane. The polypeptide is Putative membrane protein insertion efficiency factor (Pasteurella multocida (strain Pm70)).